A 59-amino-acid polypeptide reads, in one-letter code: UPF0434 protein Rsph17029_0141 (59 aa).

This sequence belongs to the UPF0434 family.

In Cereibacter sphaeroides (strain ATCC 17029 / ATH 2.4.9) (Rhodobacter sphaeroides), this protein is UPF0434 protein Rsph17029_0141.